The sequence spans 319 residues: MSATPDPRSFGKVAVLMGGTSAERDISLMSGGGVLKALQDAGVDAHAFDPKDHELVELRRQGFQRCFIALHGRHGEDGTVQGALELLRIPYTGSGVMASAIAMDKIMTKRVWLAEGLPTPRYVRLAPDEQTPERVRGVPDDLGLPLIVKPPREGSSIGVTKVLGYSQMQDAVALSARHDPDVLCEEFIDGAEVTCPVLGEGANARALPVIRIVPPEAGYDYQNKYFTDEVKYLCPSGLPADEEAEIQRIVLAAYRALGCRGWGRADLMIRASDRKPFLLEMNTSPGMTGHSLVPMSAKAAGLGYEQLCLHILQGAALDA.

One can recognise an ATP-grasp domain in the interval 109–313 (KRVWLAEGLP…YEQLCLHILQ (205 aa)). Residue 139 to 194 (PDDLGLPLIVKPPREGSSIGVTKVLGYSQMQDAVALSARHDPDVLCEEFIDGAEVT) participates in ATP binding. Positions 266, 280, and 282 each coordinate Mg(2+).

This sequence belongs to the D-alanine--D-alanine ligase family. Mg(2+) is required as a cofactor. Mn(2+) serves as cofactor.

Its subcellular location is the cytoplasm. The enzyme catalyses 2 D-alanine + ATP = D-alanyl-D-alanine + ADP + phosphate + H(+). Its pathway is cell wall biogenesis; peptidoglycan biosynthesis. Cell wall formation. In Methylibium petroleiphilum (strain ATCC BAA-1232 / LMG 22953 / PM1), this protein is D-alanine--D-alanine ligase.